Consider the following 206-residue polypeptide: Cytochrome c biogenesis ATP-binding export protein CcmA (206 aa).

The region spanning 3-206 is the ABC transporter domain; that stretch reads VSVDDLCVTR…LAGASDEAFL (204 aa). 35 to 42 is an ATP binding site; that stretch reads GPNGSGKT.

The protein belongs to the ABC transporter superfamily. CcmA exporter (TC 3.A.1.107) family. The complex is composed of two ATP-binding proteins (CcmA) and two transmembrane proteins (CcmB).

The protein localises to the cell inner membrane. The enzyme catalyses heme b(in) + ATP + H2O = heme b(out) + ADP + phosphate + H(+). Functionally, part of the ABC transporter complex CcmAB involved in the biogenesis of c-type cytochromes; once thought to export heme, this seems not to be the case, but its exact role is uncertain. Responsible for energy coupling to the transport system. The polypeptide is Cytochrome c biogenesis ATP-binding export protein CcmA (Roseobacter denitrificans (strain ATCC 33942 / OCh 114) (Erythrobacter sp. (strain OCh 114))).